Here is a 299-residue protein sequence, read N- to C-terminus: uncharacterized protein (299 aa).

This is an uncharacterized protein from Mycobacterium tuberculosis (strain CDC 1551 / Oshkosh).